The sequence spans 192 residues: uncharacterized protein (192 aa).

One can recognise a Nudix hydrolase domain in the interval 29–160 (QRQAAVLVPI…PLDIERKQQR (132 aa)). A Nudix box motif is present at residues 67 to 89 (GAADKTDRSIIETALREAQEEVA). The Mg(2+) site is built by Glu-83 and Glu-87.

This sequence belongs to the Nudix hydrolase family. PCD1 subfamily. Mn(2+) is required as a cofactor. The cofactor is Mg(2+).

Probably mediates the hydrolysis of some nucleoside diphosphate derivatives. This is an uncharacterized protein from Pectobacterium atrosepticum (strain SCRI 1043 / ATCC BAA-672) (Erwinia carotovora subsp. atroseptica).